Here is a 38-residue protein sequence, read N- to C-terminus: Kunitz-type trypsin inhibitor beta chain (38 aa).

This sequence belongs to the protease inhibitor I3 (leguminous Kunitz-type inhibitor) family. Heterodimer of an alpha and a beta chain linked by a disulfide bond.

Inhibition of trypsin. The protein is Kunitz-type trypsin inhibitor beta chain of Neltuma juliflora (Mesquite).